Consider the following 241-residue polypeptide: Enterotoxin type H (241 aa).

A signal peptide spans 1–24 (MINKIKILFSFLALLLSFTSYAKA). Cysteines 106 and 116 form a disulfide. Zn(2+) contacts are provided by Asp191, His230, and Asp232.

Belongs to the staphylococcal/streptococcal toxin family. In terms of assembly, interacts with host MHC class II molecules composed of alpha/HLA-DRA and beta/HLA-DRB1 chains. Interacts with host TCR alpha-chain TRAV27. The cofactor is Zn(2+).

The protein resides in the secreted. Functionally, staphylococcal enterotoxin that activates the host immune system by binding as unprocessed molecules to major histocompatibility (MHC) complex class II and T-cell receptor (TCR) molecules via their alpha domain, in particular TRAV27. In turn, this ternary complex activates a large number of T-lymphocytes initiating a systemic release of pro-inflammatory cytokines. Also causes the intoxication staphylococcal food poisoning syndrome. The illness characterized by high fever, hypotension, diarrhea, shock, and in some cases death. This chain is Enterotoxin type H (entH), found in Staphylococcus aureus.